A 640-amino-acid chain; its full sequence is Threonine--tRNA ligase (640 aa).

The TGS domain maps to 1 to 61 (MPIITLPDGS…DRDATLQIIT (61 aa)). The catalytic stretch occupies residues 242–533 (DHRRIGKQLD…LIEHYAGAFP (292 aa)). 3 residues coordinate Zn(2+): Cys333, His384, and His510.

Belongs to the class-II aminoacyl-tRNA synthetase family. Homodimer. The cofactor is Zn(2+).

It is found in the cytoplasm. The enzyme catalyses tRNA(Thr) + L-threonine + ATP = L-threonyl-tRNA(Thr) + AMP + diphosphate + H(+). Catalyzes the attachment of threonine to tRNA(Thr) in a two-step reaction: L-threonine is first activated by ATP to form Thr-AMP and then transferred to the acceptor end of tRNA(Thr). Also edits incorrectly charged L-seryl-tRNA(Thr). The sequence is that of Threonine--tRNA ligase from Pseudomonas aeruginosa (strain LESB58).